Consider the following 807-residue polypeptide: Centrosomal protein of 97 kDa (807 aa).

LRR repeat units lie at residues 34–55, 56–77, 78–99, 100–121, 122–143, 144–165, and 168–189; these read DTQT…EKCR, NLVQ…AKLI, HLRV…KDLV, HLEW…NSST, SLQH…SKLK, SLKT…SACL, and SLTI…AFLA. Positions 208 to 246 constitute an LRRCT domain; sequence TPSIPGFDYRPFIVSWCLNLKVLDGYVVSQKESLKAEWL. Residues 306–330 are disordered; that stretch reads RSDGYLTSSTPNKRLPLSTEHHSPT. An IQ domain is found at 519 to 548; sequence ISKAATKLQSCWRGFYARKYNPKVKDVCYE. The segment covering 607–623 has biased composition (polar residues); that stretch reads TANSSENDLPSASNSKH. The tract at residues 607-756 is disordered; sequence TANSSENDLP…RPEITTCSDN (150 aa). A compositionally biased stretch (basic and acidic residues) spans 681-690; the sequence is TGRHYNDKVP. Positions 704-724 are enriched in polar residues; sequence SQSSKDSFTSEQDSSLLQQYL.

The protein resides in the cytoplasm. The protein localises to the cytoskeleton. It localises to the microtubule organizing center. It is found in the centrosome. Acts as a key negative regulator of ciliogenesis in collaboration with ccp110 by capping the mother centriole thereby preventing cilia formation. Required for recruitment of ccp110 to the centrosome. This is Centrosomal protein of 97 kDa (cep97) from Xenopus laevis (African clawed frog).